Reading from the N-terminus, the 238-residue chain is Heme oxygenase (238 aa).

His17 lines the heme b pocket.

Belongs to the heme oxygenase family.

It localises to the plastid. The protein localises to the chloroplast. The enzyme catalyses heme b + 3 reduced [NADPH--hemoprotein reductase] + 3 O2 = biliverdin IXalpha + CO + Fe(2+) + 3 oxidized [NADPH--hemoprotein reductase] + 3 H2O + H(+). In terms of biological role, catalyzes the opening of the heme ring with the release of iron. Key enzyme in the synthesis of the chromophoric part of the photosynthetic antennae. The chain is Heme oxygenase (pbsA) from Pyropia yezoensis (Susabi-nori).